Consider the following 728-residue polypeptide: Prolyl 3-hydroxylase 1 (728 aa).

Positions 1–14 (MVAVAAAAASRATA) are cleaved as a signal peptide. 4 TPR repeats span residues 25 to 58 (PDLLYAEGTAAYARGDWPGVVLNMERALRSRAAL), 135 to 168 (RSPYNYLQVAYFKINKLEKAVAAAHTFFVGNPEH), 197 to 230 (HMHEFRLGVRLYSEEKPLEAVPHLEAALQEYFVA), and 293 to 326 (PSHYNYLQFAYYNIGNYTQAIECAKTYLLFFPND). N-linked (GlcNAc...) asparagine glycosylation occurs at Asn-308. A coiled-coil region spans residues 393 to 431 (KRLQEKQKSERETAVRISQEIGNLMKEIETLVEEKTKES). N-linked (GlcNAc...) asparagine glycans are attached at residues Asn-450, Asn-459, and Asn-532. The region spanning 556–670 (SHLVCRTAIE…RCAIALWFTL (115 aa)) is the Fe2OG dioxygenase domain. His-579, Asp-581, and His-651 together coordinate Fe cation. Residue Arg-661 is part of the active site. A disordered region spans residues 691 to 728 (SPEEVDLPQEQPLPDQQGSPKPGEESLSDRESQPKDEL). Over residues 698–707 (PQEQPLPDQQ) the composition is skewed to low complexity. A compositionally biased stretch (basic and acidic residues) spans 712-728 (PGEESLSDRESQPKDEL). Positions 725–728 (KDEL) match the Prevents secretion from ER motif.

This sequence belongs to the leprecan family. The cofactor is Fe cation. L-ascorbate serves as cofactor. Post-translationally, O-glycosylated; chondroitin sulfate. In terms of tissue distribution, expressed in basement membranes of cardiac muscle, skeletal muscle, central nervous system, intestinal tract, trachea, ear, skin, liver and kidney. In kidney, localizes to the glomerular basement membrane, mesangial matrix and Bowman's capsule of the nephron. In the renal parenchyma, expressed in the basement membranes of tubules and blood vessels. In the ear and trachea, localizes to the perimeter of resident chondrocytes in lacunae.

Its subcellular location is the endoplasmic reticulum. The protein resides in the secreted. The protein localises to the extracellular space. It is found in the extracellular matrix. It catalyses the reaction L-prolyl-[collagen] + 2-oxoglutarate + O2 = trans-3-hydroxy-L-prolyl-[collagen] + succinate + CO2. Its function is as follows. Basement membrane-associated chondroitin sulfate proteoglycan (CSPG). Has prolyl 3-hydroxylase activity catalyzing the post-translational formation of 3-hydroxyproline in -Xaa-Pro-Gly- sequences in collagens, especially types IV and V. May be involved in the secretory pathway of cells. Has growth suppressive activity in fibroblasts. This Rattus norvegicus (Rat) protein is Prolyl 3-hydroxylase 1.